We begin with the raw amino-acid sequence, 113 residues long: Flagellar transcriptional regulator FlhD (113 aa).

It belongs to the FlhD family. As to quaternary structure, homodimer; disulfide-linked. Forms a heterohexamer composed of two FlhC and four FlhD subunits. Each FlhC binds a FlhD dimer, forming a heterotrimer, and a hexamer assembles by dimerization of two heterotrimers.

Its subcellular location is the cytoplasm. Functionally, functions in complex with FlhC as a master transcriptional regulator that regulates transcription of several flagellar and non-flagellar operons by binding to their promoter region. Activates expression of class 2 flagellar genes, including fliA, which is a flagellum-specific sigma factor that turns on the class 3 genes. Also regulates genes whose products function in a variety of physiological pathways. The sequence is that of Flagellar transcriptional regulator FlhD from Salmonella typhi.